The primary structure comprises 249 residues: ATP synthase subunit a (249 aa).

The next 6 membrane-spanning stretches (helical) occupy residues 30–50 (SAYMLVAVAVISLLMIGGVAG), 84–104 (FFPLVFSLFMFIMISNMVGII), 114–134 (LIVTAALALLVFLTVLIYGFY), 143–163 (IFVPSGVPVFILPLVVFIEVF), 196–216 (LLAGLGIAGYFGAVLPLGMVI), and 221–241 (LELLVAFLQAYVFAILTCIYL).

This sequence belongs to the ATPase A chain family. F-type ATPases have 2 components, CF(1) - the catalytic core - and CF(0) - the membrane proton channel. CF(1) has five subunits: alpha(3), beta(3), gamma(1), delta(1), epsilon(1). CF(0) has four main subunits: a, b, b' and c.

The protein resides in the cell inner membrane. Key component of the proton channel; it plays a direct role in the translocation of protons across the membrane. The protein is ATP synthase subunit a of Rhodopseudomonas palustris (strain BisB18).